Here is a 354-residue protein sequence, read N- to C-terminus: Carbonic anhydrase 12 (354 aa).

Positions 1 to 24 (MPRRSLHAAAVLLLVILKEQPSSP) are cleaved as a signal peptide. The Extracellular portion of the chain corresponds to 25 to 301 (APVNGSKWTY…VQVCTAAGLS (277 aa)). Asparagine 28 and asparagine 80 each carry an N-linked (GlcNAc...) asparagine glycan. Residues 30–289 (SKWTYFGPDG…FDERLVYTSF (260 aa)) enclose the Alpha-carbonic anhydrase domain. Cysteine 50 and cysteine 230 form a disulfide bridge. Histidine 94 acts as the Proton donor/acceptor in catalysis. The Zn(2+) site is built by histidine 119, histidine 121, and histidine 145. Residue asparagine 162 is glycosylated (N-linked (GlcNAc...) asparagine). Residue 226 to 227 (TT) participates in substrate binding. A helical membrane pass occupies residues 302–322 (LGIILSLALAGILGICIVVVV). The Cytoplasmic portion of the chain corresponds to 323–354 (SIWLFRRKSIKKGDNKGVIYKPATKMETEAHA).

Belongs to the alpha-carbonic anhydrase family. As to quaternary structure, homodimer. Zn(2+) serves as cofactor. Highly expressed in colon, kidney, prostate, intestine and activated lymphocytes. Expressed at much higher levels in the renal cell cancers than in surrounding normal kidney tissue. Moderately expressed in pancreas, ovary and testis. Expressed in sweat glands and bronchiolar epithelium.

Its subcellular location is the membrane. The protein localises to the cell membrane. It catalyses the reaction hydrogencarbonate + H(+) = CO2 + H2O. With respect to regulation, inhibited by coumarins, saccharin, sulfonamide derivatives such as acetazolamide (AZA), benzenesulfonamide and derivatives (4-carboxyethylbenzene-sulfonamide, 4-carboxyethylbenzene-sulfonamide ethyl ester, 4-(acetyl-2-aminoethyl)benzene-sulfonamide, 4-aminoethylbenzene-sulfonamide) and Foscarnet (phosphonoformate trisodium salt). Reversible hydration of carbon dioxide. The chain is Carbonic anhydrase 12 from Homo sapiens (Human).